We begin with the raw amino-acid sequence, 316 residues long: Acetyl-coenzyme A carboxylase carboxyl transferase subunit beta (316 aa).

In terms of domain architecture, CoA carboxyltransferase N-terminal spans 39–308; that stretch reads LWHKCSKCGV…TPPMVLWETM (270 aa). The Zn(2+) site is built by Cys-43, Cys-46, Cys-62, and Cys-65. Residues 43–65 form a C4-type zinc finger; sequence CSKCGVLTYTKDLRANQMVCVEC.

It belongs to the AccD/PCCB family. In terms of assembly, acetyl-CoA carboxylase is a heterohexamer composed of biotin carboxyl carrier protein (AccB), biotin carboxylase (AccC) and two subunits each of ACCase subunit alpha (AccA) and ACCase subunit beta (AccD). Zn(2+) serves as cofactor.

It localises to the cytoplasm. The catalysed reaction is N(6)-carboxybiotinyl-L-lysyl-[protein] + acetyl-CoA = N(6)-biotinyl-L-lysyl-[protein] + malonyl-CoA. The protein operates within lipid metabolism; malonyl-CoA biosynthesis; malonyl-CoA from acetyl-CoA: step 1/1. Functionally, component of the acetyl coenzyme A carboxylase (ACC) complex. Biotin carboxylase (BC) catalyzes the carboxylation of biotin on its carrier protein (BCCP) and then the CO(2) group is transferred by the transcarboxylase to acetyl-CoA to form malonyl-CoA. The protein is Acetyl-coenzyme A carboxylase carboxyl transferase subunit beta of Nostoc sp. (strain PCC 7120 / SAG 25.82 / UTEX 2576).